The sequence spans 506 residues: Maturase K (506 aa).

The protein belongs to the intron maturase 2 family. MatK subfamily.

It is found in the plastid. It localises to the chloroplast. Functionally, usually encoded in the trnK tRNA gene intron. Probably assists in splicing its own and other chloroplast group II introns. The polypeptide is Maturase K (Trifolium lupinaster (Lupine clover)).